Here is a 239-residue protein sequence, read N- to C-terminus: MVQHLTAEEIIQYISDAKKSTPIKVYLNGNFEGITYPESFKVFGSEQSKVIFCEADDWKPFYEAYGSQFEDIEIEMDRRNSAIPLKDLTNTNARIEPGAFIREQAIIEDGAVVMMGATINIGAVVGEGTMIDMNATLGGRATTGKNVHVGAGAVLAGVIEPPSASPVIIEDDVLIGANAVILEGVRVGKGAIVAAGAIVTQDVPAGAVVAGTPAKVIKQASEVQDTKKEIVAALRKLND.

Belongs to the transferase hexapeptide repeat family. DapH subfamily.

The catalysed reaction is (S)-2,3,4,5-tetrahydrodipicolinate + acetyl-CoA + H2O = L-2-acetamido-6-oxoheptanedioate + CoA. The protein operates within amino-acid biosynthesis; L-lysine biosynthesis via DAP pathway; LL-2,6-diaminopimelate from (S)-tetrahydrodipicolinate (acetylase route): step 1/3. Its function is as follows. Catalyzes the transfer of an acetyl group from acetyl-CoA to tetrahydrodipicolinate. The polypeptide is 2,3,4,5-tetrahydropyridine-2,6-dicarboxylate N-acetyltransferase (Staphylococcus aureus (strain JH9)).